The chain runs to 301 residues: Haloalkane dehalogenase (301 aa).

Positions 47-284 constitute an AB hydrolase-1 domain; it reads PPIVLLHGEP…INASHFIQED (238 aa). The active-site Nucleophile is D123. D250 functions as the Proton donor in the catalytic mechanism. The active-site Proton acceptor is the H279.

Belongs to the haloalkane dehalogenase family. Type 1 subfamily. As to quaternary structure, monomer.

The catalysed reaction is 1-haloalkane + H2O = a halide anion + a primary alcohol + H(+). Catalyzes hydrolytic cleavage of carbon-halogen bonds in halogenated aliphatic compounds, leading to the formation of the corresponding primary alcohols, halide ions and protons. The chain is Haloalkane dehalogenase from Mycolicibacterium paratuberculosis (strain ATCC BAA-968 / K-10) (Mycobacterium paratuberculosis).